A 377-amino-acid chain; its full sequence is Succinyl-diaminopimelate desuccinylase (377 aa).

Residue His67 participates in Zn(2+) binding. Asp69 is a catalytic residue. Zn(2+) is bound at residue Asp100. The active-site Proton acceptor is Glu134. Zn(2+)-binding residues include Glu135, Glu163, and His349.

Homodimer. Zn(2+) is required as a cofactor.

The catalysed reaction is N-succinyl-(2S,6S)-2,6-diaminopimelate + H2O = (2S,6S)-2,6-diaminopimelate + succinate. It participates in amino-acid biosynthesis; L-lysine biosynthesis via DAP pathway; LL-2,6-diaminopimelate from (S)-tetrahydrodipicolinate (succinylase route): step 3/3. Its activity is regulated as follows. Competitively inhibited by L,L-DAP, D,L-DAP, 2-carboxyethylphosphonic acid (CEPA) and 5-mercaptopentanoic acid (MSPA). Succinate is a poor inhibitor. Its function is as follows. Catalyzes the hydrolysis of N-succinyl-L,L-diaminopimelic acid (SDAP), forming succinate and LL-2,6-diaminopimelate (DAP), an intermediate involved in the bacterial biosynthesis of lysine and meso-diaminopimelic acid, an essential component of bacterial cell walls. It can only hydrolyze L,L-N-succinyl-diaminopimelic acid (L,L-SDAP) and is inactive toward D,L-, L,D-, and D,D-SDAP. This is Succinyl-diaminopimelate desuccinylase (dapE) from Haemophilus influenzae (strain ATCC 51907 / DSM 11121 / KW20 / Rd).